The sequence spans 87 residues: MSEIKIYRVEGVMLLSHDRFPVWQKFTKEVRALNKEQAIEYVYSVLGSNHKLRRKHIRITKIEEITLSEVRDRRIVALARLERFVKL.

The protein belongs to the eukaryotic ribosomal protein eL20 family. As to quaternary structure, part of the 50S ribosomal subunit. Binds 23S rRNA.

The polypeptide is Large ribosomal subunit protein eL20 (Staphylothermus marinus (strain ATCC 43588 / DSM 3639 / JCM 9404 / F1)).